The following is a 776-amino-acid chain: MWIQVRTMDGKETHRVDSLSKLTKVDELRVKIAELFNVEPERQRLFYRGKQMEDGHTIFDYNVGLNDIVQLLVRQAVAATVLPKDKEAELSDSDSGCGSAQSESDKGSTHGESDVQSAGASGQTDTADLIDPGFGFYKINEFVDARDLNMGAWFEAQIVKVTKTPAEDGGAEDIVYHVKYEDYPENGVVQLRGKDVRPRARTVYQWHQLEPGMIVMVNYNPDDPKERGYWYDAEIQRKRETRTQREVFGKILLGDAGDSLNDCRIMFVTEIYKIEEPGSAEGPGASSDSPLKKGSNGPECKVCKDDPKKNCRVCNCHVCGIKQDPDKQLLCDECDMAFHTYCLNPPLTTIPDDEDWYCPDCRNDASEVVLAGEKLKESKKKAKMASASSSSQRDWGKGMACVGRTKQCTIVPSNHYGPVPGVPVGTLWKFRVQVSESGVHRPHVAGIHGRSNDGAYSLVLAGGYEDDVDDGNEFTYTGSGGRDLSGNKRTAEQSCDQKLTNMNRALALNCNAAVNDKEGAEAKDWKAGKPVRVVRSSKGRKHSKYSPEDGNRYDGIYKVVKYWPEKGKSGFLVWRYLLKRNDEESAPWTRDGKERIKKLGLTMQYPEGYLEAVAAKEKEKENKNEDDIEETPTKGKRKRKSQSMEEKSSPTKGTPKKMKVEAYKLSKEQKALIKDDELNKKLWDEAMESLSLGPRFVNKVEEVFLCICCQEVVYQPITTECQHNVCRECLQRSFKAKVYTCPACRHDLGKNYQMAVNKPLQAILTQLFPGYSSGRC.

Positions 1–78 (MWIQVRTMDG…VQLLVRQAVA (78 aa)) constitute a Ubiquitin-like domain. Positions 88–126 (AELSDSDSGCGSAQSESDKGSTHGESDVQSAGASGQTDT) are disordered. The span at 93-102 (SDSGCGSAQS) shows a compositional bias: polar residues. Residues 103-113 (ESDKGSTHGES) are compositionally biased toward basic and acidic residues. Positions 114 to 126 (DVQSAGASGQTDT) are enriched in polar residues. Tudor-like stretches follow at residues 135-201 (GFYK…PRAR) and 208-277 (QLEP…IEEP). The tract at residues 278-298 (GSAEGPGASSDSPLKKGSNGP) is disordered. Positions 290–299 (PLKKGSNGPE) are linker. Residues 297–364 (GPECKVCKDD…DWYCPDCRND (68 aa)) form a PHD-type zinc finger. 2 histone H3R2me0 binding regions span residues 331–335 (CDECD) and 351–353 (PDD). The 164-residue stretch at 417–580 (GPVPGVPVGT…FLVWRYLLKR (164 aa)) folds into the YDG domain. The interval 443–444 (HV) is required to promote base flipping. DNA contacts are provided by residues 461–462 (AG) and Asp-467. Required for formation of a 5-methylcytosine-binding pocket regions lie at residues 464-467 (YEDD) and 476-479 (YTGS). Positions 617–660 (EKEKENKNEDDIEETPTKGKRKRKSQSMEEKSSPTKGTPKKMKV) are disordered. At Ser-649 the chain carries Phosphoserine; by CDK2. An RING-type zinc finger spans residues 706–745 (CICCQEVVYQPITTECQHNVCRECLQRSFKAKVYTCPACR).

Post-translationally, phosphorylation at Ser-649 is required for gastrulation. Expressed in proliferating tissues. Highly expressed 24-48 hours after fertilization (hpf) in rapidly proliferating tissues, including the tectum, retina and brachial arches. Preferentially expressed in the liver bud and expression is maintained in the fully developed liver. Also expressed in the proximal gut. In adult, the highest expression is detected in testis.

The protein localises to the nucleus. It localises to the cytoplasm. It carries out the reaction S-ubiquitinyl-[E2 ubiquitin-conjugating enzyme]-L-cysteine + [acceptor protein]-L-lysine = [E2 ubiquitin-conjugating enzyme]-L-cysteine + N(6)-ubiquitinyl-[acceptor protein]-L-lysine.. Its pathway is protein modification; protein ubiquitination. Its function is as follows. Multidomain protein that acts as a key epigenetic regulator by bridging DNA methylation and chromatin modification. Specifically recognizes and binds hemimethylated DNA at replication forks via its YDG domain and recruits dnmt1 methyltransferase to ensure faithful propagation of the DNA methylation patterns through DNA replication. In addition to its role in maintenance of DNA methylation, also plays a key role in chromatin modification: through its tudor-like regions and PHD-type zinc fingers, specifically recognizes and binds histone H3 trimethylated at 'Lys-9' (H3K9me3) and unmethylated at 'Arg-2' (H3R2me0), respectively, and recruits chromatin proteins. Enriched in pericentric heterochromatin where it recruits different chromatin modifiers required for this chromatin replication. Also localizes to euchromatic regions where it negatively regulates transcription possibly by impacting DNA methylation and histone modifications. Has E3 ubiquitin-protein ligase activity by mediating the ubiquitination of target proteins. However, it is still unclear how E3 ubiquitin-protein ligase activity is related to its role in chromatin in vivo. Required for pregastrula and lens development. The chain is E3 ubiquitin-protein ligase UHRF1 (uhrf1) from Danio rerio (Zebrafish).